Reading from the N-terminus, the 265-residue chain is Phosphatidylglycerol--prolipoprotein diacylglyceryl transferase (265 aa).

Helical transmembrane passes span Val17–Gly37, Leu57–Tyr77, Ile89–Ala109, Phe127–Gly147, Gln176–Ala196, Leu201–Val218, and Leu233–Ala253. An a 1,2-diacyl-sn-glycero-3-phospho-(1'-sn-glycerol)-binding site is contributed by Arg140.

It belongs to the Lgt family.

Its subcellular location is the cell inner membrane. It carries out the reaction L-cysteinyl-[prolipoprotein] + a 1,2-diacyl-sn-glycero-3-phospho-(1'-sn-glycerol) = an S-1,2-diacyl-sn-glyceryl-L-cysteinyl-[prolipoprotein] + sn-glycerol 1-phosphate + H(+). Its pathway is protein modification; lipoprotein biosynthesis (diacylglyceryl transfer). Functionally, catalyzes the transfer of the diacylglyceryl group from phosphatidylglycerol to the sulfhydryl group of the N-terminal cysteine of a prolipoprotein, the first step in the formation of mature lipoproteins. The polypeptide is Phosphatidylglycerol--prolipoprotein diacylglyceryl transferase (Azoarcus sp. (strain BH72)).